Reading from the N-terminus, the 146-residue chain is Hemoglobin subunit beta (146 aa).

V1 carries the post-translational modification N-acetylvaline. A Globin domain is found at 2–146 (HLSDGEKNAI…VANALAHKYH (145 aa)). A Phosphoserine modification is found at S44. K59 is modified (N6-acetyllysine). Heme b is bound at residue H63. The residue at position 82 (K82) is an N6-acetyllysine. Residue H92 coordinates heme b. An S-nitrosocysteine modification is found at C93. Residue K144 is modified to N6-acetyllysine.

It belongs to the globin family. In terms of assembly, heterotetramer of two alpha chains and two beta chains. Red blood cells.

Its function is as follows. Involved in oxygen transport from the lung to the various peripheral tissues. This Spermophilus citellus (European ground squirrel) protein is Hemoglobin subunit beta (HBB).